The sequence spans 174 residues: Gamma-crystallin A (174 aa).

Beta/gamma crystallin 'Greek key' domains are found at residues 2 to 40 and 41 to 83; these read GKITFYEDRDFQGRCYNCISDCPNLRVYFSRCNSIRVDS and GCWM…RIIP. The interval 84 to 87 is connecting peptide; the sequence is HTSS. 2 Beta/gamma crystallin 'Greek key' domains span residues 88 to 128 and 129 to 171; these read HKLR…HVLE and GCWV…RRVT.

It belongs to the beta/gamma-crystallin family. As to quaternary structure, monomer.

Crystallins are the dominant structural components of the vertebrate eye lens. In Homo sapiens (Human), this protein is Gamma-crystallin A (CRYGA).